The following is a 362-amino-acid chain: Tyrosine recombinase XerH (362 aa).

A Core-binding (CB) domain is found at 43–140 (ECLNELNQAC…ALLGLFSYID (98 aa)). The region spanning 170–357 (KLPTHLNNEE…DKQRLEEAAS (188 aa)) is the Tyr recombinase domain. Active-site residues include R213, K239, H309, R312, and H335. The active-site O-(3'-phospho-DNA)-tyrosine intermediate is Y344.

It belongs to the 'phage' integrase family. XerH subfamily.

The protein localises to the cytoplasm. Its activity is regulated as follows. FtsK is required for recombination. In terms of biological role, site-specific tyrosine recombinase, which acts by catalyzing the cutting and rejoining of the recombining DNA molecules. Involved in chromosome segregation. May contribute to chromosome decatenation. The sequence is that of Tyrosine recombinase XerH from Helicobacter pylori (strain ATCC 700392 / 26695) (Campylobacter pylori).